A 212-amino-acid chain; its full sequence is Leucyl/phenylalanyl-tRNA--protein transferase (212 aa).

Belongs to the L/F-transferase family.

It localises to the cytoplasm. The enzyme catalyses N-terminal L-lysyl-[protein] + L-leucyl-tRNA(Leu) = N-terminal L-leucyl-L-lysyl-[protein] + tRNA(Leu) + H(+). The catalysed reaction is N-terminal L-arginyl-[protein] + L-leucyl-tRNA(Leu) = N-terminal L-leucyl-L-arginyl-[protein] + tRNA(Leu) + H(+). It catalyses the reaction L-phenylalanyl-tRNA(Phe) + an N-terminal L-alpha-aminoacyl-[protein] = an N-terminal L-phenylalanyl-L-alpha-aminoacyl-[protein] + tRNA(Phe). Functions in the N-end rule pathway of protein degradation where it conjugates Leu, Phe and, less efficiently, Met from aminoacyl-tRNAs to the N-termini of proteins containing an N-terminal arginine or lysine. This is Leucyl/phenylalanyl-tRNA--protein transferase from Paracoccus denitrificans (strain Pd 1222).